A 676-amino-acid chain; its full sequence is Translation initiation factor IF-2, mitochondrial (676 aa).

The tr-type G domain occupies 143–326 (KRAPVVTIMG…MDIRAENSPK (184 aa)). The segment at 152–159 (GHVDHGKT) is G1. 152 to 159 (GHVDHGKT) is a binding site for GTP. The segment at 177–181 (GITQH) is G2. GTP contacts are provided by residues 200–203 (DTPG) and 254–257 (TKID). The interval 200-203 (DTPG) is G3. The interval 254-257 (TKID) is G4. The tract at residues 296–298 (SAK) is G5.

It belongs to the TRAFAC class translation factor GTPase superfamily. Classic translation factor GTPase family. IF-2 subfamily.

The protein resides in the mitochondrion. Its function is as follows. One of the essential components for the initiation of protein synthesis. Protects formylmethionyl-tRNA from spontaneous hydrolysis and promotes its binding to the 30S ribosomal subunits. Also involved in the hydrolysis of GTP during the formation of the 70S ribosomal complex. This chain is Translation initiation factor IF-2, mitochondrial (IFM1), found in Saccharomyces cerevisiae (strain ATCC 204508 / S288c) (Baker's yeast).